Here is a 387-residue protein sequence, read N- to C-terminus: EP300-interacting inhibitor of differentiation 3 (387 aa).

Residues 1-19 (MSEEKCSLTGGEEKGEELA) show a composition bias toward basic and acidic residues. Residues 1–77 (MSEEKCSLTG…SDDLSPEAPC (77 aa)) form a disordered region. A compositionally biased stretch (acidic residues) spans 32–72 (EEDDDDDEEALKKEEEEEEEEEEEDEEEEEEGPDSSSDDLS).

The protein belongs to the NSE4 family. As to quaternary structure, component of the SMC5-SMC6 complex which consists at least of SMC5, SMC6, NSMCE2, NSMCE1, NSMCE4A or EID3 and NSMCE3. NSMCE1, NSMCE4A or EID3 and NSMCE3 probably form a subcomplex that bridges the head domains of the SMC5:SMC6 heterodimer. Homodimer, and heterodimer with EID2. Interacts with the C-terminal region of CREBBP.

Its subcellular location is the nucleus. It is found in the cytoplasm. It localises to the chromosome. The protein localises to the telomere. Its function is as follows. Tissue-specific component of the SMC5-SMC6 complex, a complex involved in repair of DNA double-strand breaks by homologous recombination. The complex may promote sister chromatid homologous recombination by recruiting the SMC1-SMC3 cohesin complex to double-strand breaks. The complex is required for telomere maintenance via recombination and mediates sumoylation of shelterin complex (telosome) components. Acts as a repressor of nuclear receptor-dependent transcription possibly by interfering with CREBBP-dependent coactivation. May function as a coinhibitor of other CREBBP/EP300-dependent transcription factors. The protein is EP300-interacting inhibitor of differentiation 3 of Rattus norvegicus (Rat).